The chain runs to 672 residues: Putative sodium/calcium exchanger 7 (672 aa).

Residues 1–23 (MAQPSILFSLTLIFLISIKSCDA) form the signal peptide. The next 12 helical transmembrane spans lie at 88–108 (VILI…VSSA), 130–150 (VAGV…GSIA), 164–184 (LGEL…TIIL), 196–216 (IRDL…FVFY), 221–241 (LWMP…VIGA), 451–471 (LTLL…QFFL), 479–499 (PGLW…IMVF), 522–542 (IAWI…LGVV), 551–571 (GLTI…VSVV), 581–601 (AAAI…PFTI), 620–640 (LILF…VQKF), and 649–669 (VLIS…TGVL).

It belongs to the Ca(2+):cation antiporter (CaCA) (TC 2.A.19) family.

Its subcellular location is the membrane. This is Putative sodium/calcium exchanger 7 (ncx-7) from Caenorhabditis elegans.